The chain runs to 121 residues: Large ribosomal subunit protein uL18 (121 aa).

The protein belongs to the universal ribosomal protein uL18 family. In terms of assembly, part of the 50S ribosomal subunit; part of the 5S rRNA/L5/L18/L25 subcomplex. Contacts the 5S and 23S rRNAs.

Its function is as follows. This is one of the proteins that bind and probably mediate the attachment of the 5S RNA into the large ribosomal subunit, where it forms part of the central protuberance. The chain is Large ribosomal subunit protein uL18 from Mesomycoplasma hyopneumoniae (strain J / ATCC 25934 / NCTC 10110) (Mycoplasma hyopneumoniae).